The primary structure comprises 271 residues: Shikimate dehydrogenase (NADP(+)) (271 aa).

Residues 14-16 (SLS) and T61 contribute to the shikimate site. The Proton acceptor role is filled by K65. Residues N86 and D101 each coordinate shikimate. NADP(+)-binding positions include 125-129 (GAGGA) and I212. Y214 provides a ligand contact to shikimate. Residue G235 participates in NADP(+) binding.

The protein belongs to the shikimate dehydrogenase family. In terms of assembly, homodimer.

It catalyses the reaction shikimate + NADP(+) = 3-dehydroshikimate + NADPH + H(+). The protein operates within metabolic intermediate biosynthesis; chorismate biosynthesis; chorismate from D-erythrose 4-phosphate and phosphoenolpyruvate: step 4/7. Functionally, involved in the biosynthesis of the chorismate, which leads to the biosynthesis of aromatic amino acids. Catalyzes the reversible NADPH linked reduction of 3-dehydroshikimate (DHSA) to yield shikimate (SA). This Clostridium perfringens (strain 13 / Type A) protein is Shikimate dehydrogenase (NADP(+)).